Here is a 450-residue protein sequence, read N- to C-terminus: Probable ECA polymerase (450 aa).

The next 11 helical transmembrane spans lie at 6–26, 37–57, 63–83, 120–140, 155–175, 181–201, 207–227, 228–248, 341–361, 378–398, and 410–430; these read FSGL…LTWF, VFFS…TSVL, VGVA…CFYA, LMGI…FLLF, GVAL…IYFL, AWLF…MIVG, IIIA…ISLW, MLVA…LKRY, LVVM…GLII, YKAA…IVLA, and VFFL…FWLF.

It belongs to the WzyE family. Probably part of a complex composed of WzxE, WzyE and WzzE.

The protein localises to the cell inner membrane. It participates in bacterial outer membrane biogenesis; enterobacterial common antigen biosynthesis. Probably involved in the polymerization of enterobacterial common antigen (ECA) trisaccharide repeat units. This Citrobacter koseri (strain ATCC BAA-895 / CDC 4225-83 / SGSC4696) protein is Probable ECA polymerase.